Reading from the N-terminus, the 356-residue chain is S-adenosylmethionine:tRNA ribosyltransferase-isomerase (356 aa).

The protein belongs to the QueA family. Monomer.

Its subcellular location is the cytoplasm. It catalyses the reaction 7-aminomethyl-7-carbaguanosine(34) in tRNA + S-adenosyl-L-methionine = epoxyqueuosine(34) in tRNA + adenine + L-methionine + 2 H(+). Its pathway is tRNA modification; tRNA-queuosine biosynthesis. Functionally, transfers and isomerizes the ribose moiety from AdoMet to the 7-aminomethyl group of 7-deazaguanine (preQ1-tRNA) to give epoxyqueuosine (oQ-tRNA). In Yersinia pseudotuberculosis serotype IB (strain PB1/+), this protein is S-adenosylmethionine:tRNA ribosyltransferase-isomerase.